Consider the following 361-residue polypeptide: uncharacterized protein (361 aa).

33–40 is an ATP binding site; sequence GPINSGKT.

Belongs to the archaeal ATPase family.

This is an uncharacterized protein from Methanocaldococcus jannaschii (strain ATCC 43067 / DSM 2661 / JAL-1 / JCM 10045 / NBRC 100440) (Methanococcus jannaschii).